The chain runs to 711 residues: Origin recognition complex subunit 3 (711 aa).

Phosphoserine occurs at positions 23 and 516.

This sequence belongs to the ORC3 family. As to quaternary structure, component of ORC, a complex composed of at least 6 subunits: ORC1, ORC2, ORC3, ORC4, ORC5 and ORC6. ORC is regulated in a cell-cycle dependent manner. It is sequentially assembled at the exit from anaphase of mitosis and disassembled as cells enter S phase. In terms of processing, multi-mono-ubiquitinated by OBI1; ubiquitination is important for efficient DNA replication origin site activation. Ubiquitination levels are low in mitotic and early G1-phAse cells and are induced in late G1-/early S-phase, peaking in S-phase and decrease toward the end of the cell cycle.

The protein localises to the nucleus. It is found in the chromosome. Functionally, component of the origin recognition complex (ORC) that binds origins of replication. DNA-binding is ATP-dependent. The specific DNA sequences that define origins of replication have not been identified yet. ORC is required to assemble the pre-replication complex necessary to initiate DNA replication. Binds histone H3 and H4 trimethylation marks H3K9me3, H3K27me3 and H4K20me3. This Homo sapiens (Human) protein is Origin recognition complex subunit 3 (ORC3).